The sequence spans 264 residues: Small ribosomal subunit protein eS1 (264 aa).

An N6-acetyllysine; alternate modification is found at Lys-34. A Glycyl lysine isopeptide (Lys-Gly) (interchain with G-Cter in SUMO2); alternate cross-link involves residue Lys-34. Lys-56 carries the N6-acetyllysine modification. The residue at position 155 (Tyr-155) is an ADP-ribosyltyrosine. The interval His-232–Val-264 is disordered. At Ser-237 the chain carries Phosphoserine. Residues Thr-242–Gly-255 show a composition bias toward basic and acidic residues. At Lys-249 the chain carries N6-acetyllysine; alternate. A Glycyl lysine isopeptide (Lys-Gly) (interchain with G-Cter in SUMO2); alternate cross-link involves residue Lys-249. The residue at position 256 (Tyr-256) is a Phosphotyrosine. Residue Ser-263 is modified to Phosphoserine.

The protein belongs to the eukaryotic ribosomal protein eS1 family. In terms of assembly, component of the small ribosomal subunit. Mature ribosomes consist of a small (40S) and a large (60S) subunit. The 40S subunit contains about 33 different proteins and 1 molecule of RNA (18S). The 60S subunit contains about 49 different proteins and 3 molecules of RNA (28S, 5.8S and 5S). Identified in a IGF2BP1-dependent mRNP granule complex containing untranslated mRNAs. Binds with high affinity to IPO4. Interacts with DDIT3. Part of the small subunit (SSU) processome, composed of more than 70 proteins and the RNA chaperone small nucleolar RNA (snoRNA) U3. The protein designated S3b has the same amino acid sequence as S3a except that it lacks the C-terminal 12 residues. It is probable that S3a is converted by proteolysis, either physiologically or fortuitously, to S3b. In terms of processing, ADP-ribosylated at Tyr-155 by PARP1 in presence of HPF1.

It is found in the cytoplasm. It localises to the nucleus. The protein localises to the nucleolus. In terms of biological role, component of the small ribosomal subunit. The ribosome is a large ribonucleoprotein complex responsible for the synthesis of proteins in the cell. Part of the small subunit (SSU) processome, first precursor of the small eukaryotic ribosomal subunit. During the assembly of the SSU processome in the nucleolus, many ribosome biogenesis factors, an RNA chaperone and ribosomal proteins associate with the nascent pre-rRNA and work in concert to generate RNA folding, modifications, rearrangements and cleavage as well as targeted degradation of pre-ribosomal RNA by the RNA exosome. May play a role during erythropoiesis through regulation of transcription factor DDIT3. The protein is Small ribosomal subunit protein eS1 (Rps3a) of Rattus norvegicus (Rat).